The sequence spans 296 residues: Elongation factor Ts (296 aa).

The interval 79–82 (TDFV) is involved in Mg(2+) ion dislocation from EF-Tu.

Belongs to the EF-Ts family.

The protein resides in the cytoplasm. Functionally, associates with the EF-Tu.GDP complex and induces the exchange of GDP to GTP. It remains bound to the aminoacyl-tRNA.EF-Tu.GTP complex up to the GTP hydrolysis stage on the ribosome. This chain is Elongation factor Ts (tsf), found in Spiroplasma citri.